The sequence spans 414 residues: Gamma-glutamyl phosphate reductase (414 aa).

It belongs to the gamma-glutamyl phosphate reductase family.

It localises to the cytoplasm. The catalysed reaction is L-glutamate 5-semialdehyde + phosphate + NADP(+) = L-glutamyl 5-phosphate + NADPH + H(+). The protein operates within amino-acid biosynthesis; L-proline biosynthesis; L-glutamate 5-semialdehyde from L-glutamate: step 2/2. Catalyzes the NADPH-dependent reduction of L-glutamate 5-phosphate into L-glutamate 5-semialdehyde and phosphate. The product spontaneously undergoes cyclization to form 1-pyrroline-5-carboxylate. This is Gamma-glutamyl phosphate reductase from Geobacillus thermodenitrificans (strain NG80-2).